Reading from the N-terminus, the 349-residue chain is Protein-glutamate methylesterase/protein-glutamine glutaminase (349 aa).

The 118-residue stretch at 5-122 folds into the Response regulatory domain; that stretch reads RVLSVDDSAL…REGMLAYSEM (118 aa). D56 carries the 4-aspartylphosphate modification. A CheB-type methylesterase domain is found at 152–344; it reads LLSSEKLIAI…QQMLAKISAG (193 aa). Catalysis depends on residues S164, H190, and D286.

Belongs to the CheB family. Phosphorylated by CheA. Phosphorylation of the N-terminal regulatory domain activates the methylesterase activity.

The protein resides in the cytoplasm. It carries out the reaction [protein]-L-glutamate 5-O-methyl ester + H2O = L-glutamyl-[protein] + methanol + H(+). It catalyses the reaction L-glutaminyl-[protein] + H2O = L-glutamyl-[protein] + NH4(+). Involved in chemotaxis. Part of a chemotaxis signal transduction system that modulates chemotaxis in response to various stimuli. Catalyzes the demethylation of specific methylglutamate residues introduced into the chemoreceptors (methyl-accepting chemotaxis proteins or MCP) by CheR. Also mediates the irreversible deamidation of specific glutamine residues to glutamic acid. This is Protein-glutamate methylesterase/protein-glutamine glutaminase from Salmonella typhi.